A 155-amino-acid chain; its full sequence is Ribonuclease H (155 aa).

Positions 1-146 constitute an RNase H type-1 domain; that stretch reads MPELFAYTDG…ADELARAGMK (146 aa). The Mg(2+) site is built by D9, E52, D74, and D138.

It belongs to the RNase H family. As to quaternary structure, monomer. Requires Mg(2+) as cofactor.

Its subcellular location is the cytoplasm. It carries out the reaction Endonucleolytic cleavage to 5'-phosphomonoester.. Functionally, endonuclease that specifically degrades the RNA of RNA-DNA hybrids. The sequence is that of Ribonuclease H from Ruegeria pomeroyi (strain ATCC 700808 / DSM 15171 / DSS-3) (Silicibacter pomeroyi).